The chain runs to 432 residues: Adenylosuccinate synthetase (432 aa).

GTP contacts are provided by residues 13 to 19 (GDEGKGK) and 41 to 43 (GHT). The active-site Proton acceptor is aspartate 14. Mg(2+) is bound by residues aspartate 14 and glycine 41. IMP contacts are provided by residues 14 to 17 (DEGK), 39 to 42 (NAGH), threonine 130, arginine 144, glutamine 225, threonine 240, and arginine 304. Residue histidine 42 is the Proton donor of the active site. 300–306 (ATTGRRR) serves as a coordination point for substrate. Residues arginine 306, 332-334 (KLD), and 415-417 (STG) contribute to the GTP site.

Belongs to the adenylosuccinate synthetase family. In terms of assembly, homodimer. Mg(2+) is required as a cofactor.

The protein resides in the cytoplasm. It carries out the reaction IMP + L-aspartate + GTP = N(6)-(1,2-dicarboxyethyl)-AMP + GDP + phosphate + 2 H(+). It functions in the pathway purine metabolism; AMP biosynthesis via de novo pathway; AMP from IMP: step 1/2. Functionally, plays an important role in the de novo pathway of purine nucleotide biosynthesis. Catalyzes the first committed step in the biosynthesis of AMP from IMP. In Escherichia coli (strain K12), this protein is Adenylosuccinate synthetase.